We begin with the raw amino-acid sequence, 385 residues long: MSEYWLISAPGDKTCQQTWEALNQATKANNLSLNYKFPIPDLKVGTLDQLVGLSDDLGKLDTFVEGVTRKVAQYLGEVLEDQRDKLHENLTANNDDLPHYLTRFQWDMAKYPIKQSLRNIADIISKQVGQIDADLKVKSSAYNALKGNLQNLEKKQTGSLLTRNLADLVKKEHFILDSEYLTTLLVIVPKSMFNDWNANYEKITDMIVPRSTQLIHQDGDYGLFTVTLFKKVVDEFKLHARERKFVVREFAYNEADLVAGKNEITKLLTDKKKQFGPLVRWLKVNFSECFCAWIHVKALRVFVESVLRYGLPVNFQAALLVPSRRSARRLRDTLHALYAHLDHSAHHHANAQQDSVELAGLGFGQSEYYPYVFYKINIDMIEKAA.

Belongs to the V-ATPase C subunit family. V-ATPase is a heteromultimeric enzyme made up of two complexes: the ATP-hydrolytic V1 complex and the proton translocation V0 complex. The V1 complex consists of three catalytic AB heterodimers that form a heterohexamer, three peripheral stalks each consisting of EG heterodimers, one central rotor including subunits D and F, and the regulatory subunits C and H. The proton translocation complex V0 consists of the proton transport subunit a, a ring of proteolipid subunits c9c'', rotary subunit d, subunits e and f, and the accessory subunits VhaAC45 and ATP6AP2.

Functionally, subunit of the V1 complex of vacuolar(H+)-ATPase (V-ATPase), a multisubunit enzyme composed of a peripheral complex (V1) that hydrolyzes ATP and a membrane integral complex (V0) that translocates protons. V-ATPase is responsible for acidifying and maintaining the pH of intracellular compartments and in some cell types, is targeted to the plasma membrane, where it is responsible for acidifying the extracellular environment. Subunit C is necessary for the assembly of the catalytic sector of the enzyme and is likely to have a specific function in its catalytic activity. This is V-type proton ATPase subunit C from Manduca sexta (Tobacco hawkmoth).